Consider the following 363-residue polypeptide: Ribosomal RNA large subunit methyltransferase M (363 aa).

S-adenosyl-L-methionine contacts are provided by residues S194, 227–230 (CPGG), D246, D266, and D284. K313 (proton acceptor) is an active-site residue.

The protein belongs to the class I-like SAM-binding methyltransferase superfamily. RNA methyltransferase RlmE family. RlmM subfamily. In terms of assembly, monomer.

The protein localises to the cytoplasm. It catalyses the reaction cytidine(2498) in 23S rRNA + S-adenosyl-L-methionine = 2'-O-methylcytidine(2498) in 23S rRNA + S-adenosyl-L-homocysteine + H(+). Catalyzes the 2'-O-methylation at nucleotide C2498 in 23S rRNA. This chain is Ribosomal RNA large subunit methyltransferase M, found in Haemophilus influenzae (strain PittEE).